Here is a 397-residue protein sequence, read N- to C-terminus: 3-ketoacyl-CoA thiolase, mitochondrial (397 aa).

The transit peptide at 1 to 16 directs the protein to the mitochondrion; not cleaved; the sequence is MALLRGVFVVAAKRTP. Lysine 25 is modified (N6-acetyllysine; alternate). N6-succinyllysine; alternate is present on lysine 25. Residue lysine 45 is modified to N6-succinyllysine. Residue cysteine 92 is the Acyl-thioester intermediate of the active site. The residue at position 119 (threonine 119) is a Phosphothreonine. Position 121 is a phosphoserine (serine 121). A Phosphotyrosine modification is found at tyrosine 127. At threonine 136 the chain carries Phosphothreonine. N6-acetyllysine; alternate is present on lysine 137. Residue lysine 137 is modified to N6-succinyllysine; alternate. Serine 140 is modified (phosphoserine). N6-acetyllysine; alternate occurs at positions 143, 171, 191, and 209. An N6-succinyllysine; alternate mark is found at lysine 143, lysine 171, lysine 191, and lysine 209. Residues lysine 211, lysine 212, and lysine 214 each carry the N6-succinyllysine modification. Residues arginine 224 and threonine 227 each coordinate CoA. N6-acetyllysine; alternate is present on lysine 234. N6-succinyllysine; alternate is present on lysine 234. Residue lysine 240 is modified to N6-succinyllysine. The residue at position 241 (lysine 241) is an N6-acetyllysine. Residue serine 251 coordinates CoA. N6-acetyllysine occurs at positions 269 and 270. Lysine 305 carries the N6-acetyllysine; alternate modification. An N6-succinyllysine; alternate modification is found at lysine 305. Serine 310 bears the Phosphoserine mark. Position 312 is an N6-acetyllysine; alternate (lysine 312). Lysine 312 carries the post-translational modification N6-succinyllysine; alternate. Phosphoserine is present on serine 333. N6-acetyllysine occurs at positions 340 and 375. Cysteine 382 acts as the Proton donor/acceptor in catalysis.

This sequence belongs to the thiolase-like superfamily. Thiolase family. In terms of assembly, homotetramer. Interacts with BNIP3.

The protein localises to the mitochondrion. It catalyses the reaction an acyl-CoA + acetyl-CoA = a 3-oxoacyl-CoA + CoA. The enzyme catalyses 2 acetyl-CoA = acetoacetyl-CoA + CoA. The catalysed reaction is acetyl-CoA + H2O = acetate + CoA + H(+). It carries out the reaction propanoyl-CoA + H2O = propanoate + CoA + H(+). It catalyses the reaction butanoyl-CoA + H2O = butanoate + CoA + H(+). The enzyme catalyses hexanoyl-CoA + H2O = hexanoate + CoA + H(+). The catalysed reaction is octanoyl-CoA + H2O = octanoate + CoA + H(+). It carries out the reaction decanoyl-CoA + H2O = decanoate + CoA + H(+). It catalyses the reaction dodecanoyl-CoA + H2O = dodecanoate + CoA + H(+). The enzyme catalyses tetradecanoyl-CoA + H2O = tetradecanoate + CoA + H(+). The catalysed reaction is hexadecanoyl-CoA + H2O = hexadecanoate + CoA + H(+). Its pathway is lipid metabolism; fatty acid beta-oxidation. Its function is as follows. In the production of energy from fats, this is one of the enzymes that catalyzes the last step of the mitochondrial beta-oxidation pathway, an aerobic process breaking down fatty acids into acetyl-CoA. Using free coenzyme A/CoA, catalyzes the thiolytic cleavage of medium- to long-chain unbranched 3-oxoacyl-CoAs into acetyl-CoA and a fatty acyl-CoA shortened by two carbon atoms. Also catalyzes the condensation of two acetyl-CoA molecules into acetoacetyl-CoA and could be involved in the production of ketone bodies. Also displays hydrolase activity on various fatty acyl-CoAs. Thereby, could be responsible for the production of acetate in a side reaction to beta-oxidation. Abolishes BNIP3-mediated apoptosis and mitochondrial damage. The polypeptide is 3-ketoacyl-CoA thiolase, mitochondrial (ACAA2) (Homo sapiens (Human)).